We begin with the raw amino-acid sequence, 745 residues long: Prolyl oligopeptidase ophP (745 aa).

Residues serine 580, aspartate 665, and histidine 701 each act as charge relay system in the active site.

Belongs to the peptidase S9A family. In terms of assembly, monomer.

It catalyses the reaction Hydrolysis of Pro-|-Xaa &gt;&gt; Ala-|-Xaa in oligopeptides.. It functions in the pathway mycotoxin biosynthesis. Functionally, prolyl oligopeptidase; part of the gene cluster that mediates the biosynthesis of omphalotin A, a highly methylated cyclic dodecapeptide with nematodicidal activity. Excises and catalyzes the macrocyclization of the methylated core peptide of OphMA to yield omphalotin A. OphP works in a two-step fashion with an initial cleavage at the N-terminus, followed by a second cleavage at the C-terminus of the core peptide. According to this mechanism, the free N-terminus of the core peptide, generated by the first cleavage, attacks the covalent intermediate of the second cleavage, which results in macrocyclization of the core peptide. This is Prolyl oligopeptidase ophP from Omphalotus olearius (Jack o'lantern).